The sequence spans 933 residues: Progesterone receptor (933 aa).

Residues M1–L164 are AF3; mediates transcriptional activation. Residues M1–V256 form a disordered region. Residues M1–I566 form a modulating, Pro-Rich region. S20 carries the phosphoserine modification. 2 consecutive short sequence motifs (LXXL motif) follow at residues L55–L59 and L115–L119. Phosphoserine occurs at positions 130 and 162. The segment at M165–H305 is mediates transcriptional transrepression. Residues K183–R187 carry the Nuclear localization signal motif. Phosphoserine occurs at positions 190 and 213. Over residues E220–D231 the composition is skewed to acidic residues. The residue at position 294 (S294) is a Phosphoserine; by MAPK1. Residues G332 to F380 are disordered. Residues A335 to S350 show a composition bias toward low complexity. Phosphoserine; by MAPK is present on S345. K388 is covalently cross-linked (Glycyl lysine isopeptide (Lys-Gly) (interchain with G-Cter in SUMO); alternate). K388 is covalently cross-linked (Glycyl lysine isopeptide (Lys-Gly) (interchain with G-Cter in ubiquitin); alternate). At S400 the chain carries Phosphoserine; by CDK2. The disordered stretch occupies residues P415 to S454. A compositionally biased stretch (pro residues) spans P418–R433. A compositionally biased stretch (low complexity) spans P434–S454. Positions S456–R546 are AF1; mediates transcriptional activation. A Glycyl lysine isopeptide (Lys-Gly) (interchain with G-Cter in SUMO) cross-link involves residue K531. NR C4-type zinc fingers lie at residues C567 to C587 and C603 to C627. The nuclear receptor DNA-binding region spans C567 to F639. S676 is subject to Phosphoserine. The region spanning Q679 to I913 is the NR LBD domain. The interval L687–K933 is AF2; mediates transcriptional activation. R766 contributes to the progesterone binding site.

It belongs to the nuclear hormone receptor family. As to quaternary structure, interacts with SMARD1 and UNC45A. Interacts with CUEDC2; the interaction promotes ubiquitination, decreases sumoylation, and represses transcriptional activity. Interacts with PIAS3; the interaction promotes sumoylation of PR in a hormone-dependent manner, inhibits DNA-binding, and alters nuclear export. Interacts with SP1; the interaction requires ligand-induced phosphorylation on Ser-345 by ERK1/2-MAPK. Interacts with PRMT2. Interacts with NCOA2 and NCOA1. Interacts with KLF9. Interacts with GTF2B. Post-translationally, phosphorylated on multiple serine sites. Several of these sites are hormone-dependent. Phosphorylation on Ser-294 is highly hormone-dependent and modulates ubiquitination and sumoylation on Lys-388. Phosphorylation on Ser-345 also requires induction by hormone. Basal phosphorylation on Ser-162, Ser-190 and Ser-400 is increased in response to progesterone and can be phosphorylated in vitro by the CDK2-A1 complex. Increased levels of phosphorylation on Ser-400 also in the presence of EGF, heregulin, IGF, PMA and FBS. Phosphorylation at this site by CDK2 is ligand-independent, and increases nuclear translocation and transcriptional activity. Phosphorylation at Ser-162 and Ser-294, but not at Ser-190, is impaired during the G(2)/M phase of the cell cycle. Phosphorylation on Ser-345 by ERK1/2 MAPK is required for interaction with SP1. In terms of processing, sumoylation is hormone-dependent and represses transcriptional activity. Sumoylation on all three sites is enhanced by PIAS3. Desumoylated by SENP1. Sumoylation on Lys-388, the main site of sumoylation, is repressed by ubiquitination on the same site, and modulated by phosphorylation at Ser-294. Ubiquitination is hormone-dependent and represses sumoylation on the same site. Promoted by MAPK-mediated phosphorylation on Ser-294. Ubiquitinated by UBR5, leading to its degradation: UBR5 specifically recognizes and binds ligand-bound PGR when it is not associated with coactivators (NCOAs). In presence of NCOAs, the UBR5-degron is not accessible, preventing its ubiquitination and degradation. Post-translationally, palmitoylated by ZDHHC7 and ZDHHC21. Palmitoylation is required for plasma membrane targeting and for rapid intracellular signaling via ERK and AKT kinases and cAMP generation.

The protein resides in the nucleus. The protein localises to the cytoplasm. Functionally, the steroid hormones and their receptors are involved in the regulation of eukaryotic gene expression and affect cellular proliferation and differentiation in target tissues. Transcriptional activator of several progesteron-dependent promoters in a variety of cell types. Involved in activation of SRC-dependent MAPK signaling on hormone stimulation. The protein is Progesterone receptor (PGR) of Chlorocebus aethiops (Green monkey).